The primary structure comprises 143 residues: Hemoglobin subunit alpha-2 (143 aa).

Serine 2 bears the N-acetylserine mark. Residues 2 to 143 (SLSSKDKATV…LALALSEKYR (142 aa)) enclose the Globin domain. Histidine 60 is an O2 binding site. Heme b is bound at residue histidine 89.

The protein belongs to the globin family. As to quaternary structure, hb 2 is a heterotetramer of two alpha-2 and two beta-1 chains. Hb 3 is a heterotetramer of two alpha-2 and two beta-2 chains. In terms of tissue distribution, red blood cells.

Functionally, involved in oxygen transport from gills to the various peripheral tissues. The chain is Hemoglobin subunit alpha-2 (hba2) from Arctogadus glacialis (Arctic cod).